Reading from the N-terminus, the 356-residue chain is Peptide chain release factor 1 (356 aa).

Q233 is subject to N5-methylglutamine.

This sequence belongs to the prokaryotic/mitochondrial release factor family. In terms of processing, methylated by PrmC. Methylation increases the termination efficiency of RF1.

It localises to the cytoplasm. Its function is as follows. Peptide chain release factor 1 directs the termination of translation in response to the peptide chain termination codons UAG and UAA. The protein is Peptide chain release factor 1 of Halalkalibacterium halodurans (strain ATCC BAA-125 / DSM 18197 / FERM 7344 / JCM 9153 / C-125) (Bacillus halodurans).